A 139-amino-acid polypeptide reads, in one-letter code: General odorant-binding protein 56a (139 aa).

The first 19 residues, 1-19 (MNSYFVIALSALFVTLAVG), serve as a signal peptide directing secretion. Residue Asn-23 is glycosylated (N-linked (GlcNAc...) asparagine). 3 cysteine pairs are disulfide-bonded: Cys-39–Cys-71, Cys-67–Cys-118, and Cys-109–Cys-127.

The protein belongs to the PBP/GOBP family. As to expression, expressed in ventral pits of larvae. In adults, it is not specifically expressed in chemosensory organs. Also expressed in stalk cells at the proximal tip of the wing disk.

The protein resides in the secreted. In terms of biological role, present in the aqueous fluid surrounding olfactory sensory dendrites and are thought to aid in the capture and transport of hydrophobic odorants into and through this fluid. The sequence is that of General odorant-binding protein 56a (Obp56a) from Drosophila melanogaster (Fruit fly).